Reading from the N-terminus, the 631-residue chain is Phosphomethylpyrimidine synthase (631 aa).

Residues Asn239, Met268, Tyr297, His333, 353–355 (SRG), 394–397 (DGLR), and Glu433 contribute to the substrate site. Position 437 (His437) interacts with Zn(2+). Tyr460 lines the substrate pocket. Residue His501 participates in Zn(2+) binding. Residues Cys581, Cys584, and Cys589 each coordinate [4Fe-4S] cluster.

Belongs to the ThiC family. As to quaternary structure, homodimer. [4Fe-4S] cluster serves as cofactor.

It catalyses the reaction 5-amino-1-(5-phospho-beta-D-ribosyl)imidazole + S-adenosyl-L-methionine = 4-amino-2-methyl-5-(phosphooxymethyl)pyrimidine + CO + 5'-deoxyadenosine + formate + L-methionine + 3 H(+). It functions in the pathway cofactor biosynthesis; thiamine diphosphate biosynthesis. Functionally, catalyzes the synthesis of the hydroxymethylpyrimidine phosphate (HMP-P) moiety of thiamine from aminoimidazole ribotide (AIR) in a radical S-adenosyl-L-methionine (SAM)-dependent reaction. This Escherichia coli O157:H7 protein is Phosphomethylpyrimidine synthase.